An 89-amino-acid polypeptide reads, in one-letter code: UPF0147 protein Msed_2034 (89 aa).

The protein belongs to the UPF0147 family.

The protein is UPF0147 protein Msed_2034 of Metallosphaera sedula (strain ATCC 51363 / DSM 5348 / JCM 9185 / NBRC 15509 / TH2).